The sequence spans 390 residues: 4-O-beta-D-mannosyl-D-glucose phosphorylase (390 aa).

It belongs to the glycosyl hydrolase 130 family.

It catalyses the reaction 4-O-beta-D-mannopyranosyl-D-glucopyranose + phosphate = alpha-D-mannose 1-phosphate + D-glucose. Functionally, converts 4-O-beta-D-mannopyranosyl-D-glucopyranose (Man-Glc) to mannose 1-phosphate (Man1P) and glucose. Involved in a mannan catabolic pathway which feeds into glycolysis. The polypeptide is 4-O-beta-D-mannosyl-D-glucose phosphorylase (Bacteroides fragilis (strain ATCC 25285 / DSM 2151 / CCUG 4856 / JCM 11019 / LMG 10263 / NCTC 9343 / Onslow / VPI 2553 / EN-2)).